We begin with the raw amino-acid sequence, 270 residues long: 3-methyl-2-oxobutanoate hydroxymethyltransferase (270 aa).

Positions 48 and 87 each coordinate Mg(2+). 3-methyl-2-oxobutanoate contacts are provided by residues 48-49, Asp-87, and Lys-117; that span reads DS. Glu-119 contacts Mg(2+). Residue Glu-186 is the Proton acceptor of the active site.

Belongs to the PanB family. As to quaternary structure, homodecamer; pentamer of dimers. It depends on Mg(2+) as a cofactor.

The protein resides in the cytoplasm. The catalysed reaction is 3-methyl-2-oxobutanoate + (6R)-5,10-methylene-5,6,7,8-tetrahydrofolate + H2O = 2-dehydropantoate + (6S)-5,6,7,8-tetrahydrofolate. It participates in cofactor biosynthesis; (R)-pantothenate biosynthesis; (R)-pantoate from 3-methyl-2-oxobutanoate: step 1/2. Catalyzes the reversible reaction in which hydroxymethyl group from 5,10-methylenetetrahydrofolate is transferred onto alpha-ketoisovalerate to form ketopantoate. This chain is 3-methyl-2-oxobutanoate hydroxymethyltransferase, found in Synechococcus sp. (strain RCC307).